The primary structure comprises 504 residues: 2-isopropylmalate synthase (504 aa).

The region spanning 6–267 (IIVFDTTLRD…YTDINFKEIY (262 aa)) is the Pyruvate carboxyltransferase domain. Residues Asp-15, His-201, His-203, and Asn-237 each coordinate Mn(2+). The regulatory domain stretch occupies residues 391–504 (EIIALSSSEC…ALNSYISMKQ (114 aa)).

This sequence belongs to the alpha-IPM synthase/homocitrate synthase family. LeuA type 1 subfamily. In terms of assembly, homodimer. Requires Mn(2+) as cofactor.

The protein localises to the cytoplasm. It catalyses the reaction 3-methyl-2-oxobutanoate + acetyl-CoA + H2O = (2S)-2-isopropylmalate + CoA + H(+). Its pathway is amino-acid biosynthesis; L-leucine biosynthesis; L-leucine from 3-methyl-2-oxobutanoate: step 1/4. Catalyzes the condensation of the acetyl group of acetyl-CoA with 3-methyl-2-oxobutanoate (2-ketoisovalerate) to form 3-carboxy-3-hydroxy-4-methylpentanoate (2-isopropylmalate). The protein is 2-isopropylmalate synthase of Campylobacter hominis (strain ATCC BAA-381 / DSM 21671 / CCUG 45161 / LMG 19568 / NCTC 13146 / CH001A).